A 267-amino-acid chain; its full sequence is MSENRITQLVKQDKKFLIAYYMPEFPVTGSTLPVLEALEESGVDIIELGMPYSDPIGDGPVIQDAAHTAIRNGVTIKYLLELVRRARQGEGCKKITAPILLMGYCNPLIAYGGDCFLHDALEAGVDGLLIPDLPPEEAADFLEKAKGFGLTVVFLVSPVTPPERIELIDSLSTDFSYCLAVNGTTGTAKLSDTATESAVDDYLKRVRQHARKKFVVGFGIKDKAQVEHMWNFADGAVVGSALLQYIAASATPEETARLAAEFWKTLR.

Residues E47 and D58 each act as proton acceptor in the active site.

This sequence belongs to the TrpA family. In terms of assembly, tetramer of two alpha and two beta chains.

The enzyme catalyses (1S,2R)-1-C-(indol-3-yl)glycerol 3-phosphate + L-serine = D-glyceraldehyde 3-phosphate + L-tryptophan + H2O. The protein operates within amino-acid biosynthesis; L-tryptophan biosynthesis; L-tryptophan from chorismate: step 5/5. The alpha subunit is responsible for the aldol cleavage of indoleglycerol phosphate to indole and glyceraldehyde 3-phosphate. The polypeptide is Tryptophan synthase alpha chain (Pelodictyon phaeoclathratiforme (strain DSM 5477 / BU-1)).